We begin with the raw amino-acid sequence, 119 residues long: Holo-[acyl-carrier-protein] synthase (119 aa).

Mg(2+)-binding residues include Asp8 and Glu58.

It belongs to the P-Pant transferase superfamily. AcpS family. Mg(2+) serves as cofactor.

The protein resides in the cytoplasm. The enzyme catalyses apo-[ACP] + CoA = holo-[ACP] + adenosine 3',5'-bisphosphate + H(+). Its function is as follows. Transfers the 4'-phosphopantetheine moiety from coenzyme A to a Ser of acyl-carrier-protein. The polypeptide is Holo-[acyl-carrier-protein] synthase (Bacillus mycoides (strain KBAB4) (Bacillus weihenstephanensis)).